The following is a 108-amino-acid chain: UPF0060 membrane protein YnfA (108 aa).

The Periplasmic portion of the chain corresponds to M1–T5. The helical transmembrane segment at L6–I26 threads the bilayer. At K27–A30 the chain is on the cytoplasmic side. Residues S31–L51 form a helical membrane-spanning segment. Over H52 to Y60 the chain is Periplasmic. The chain crosses the membrane as a helical span at residues A61–V81. Over R82–T84 the chain is Cytoplasmic. The helical transmembrane segment at V85–W105 threads the bilayer. The Periplasmic portion of the chain corresponds to G106–T108.

This sequence belongs to the UPF0060 family.

The protein resides in the cell inner membrane. The protein is UPF0060 membrane protein YnfA of Salmonella dublin (strain CT_02021853).